Reading from the N-terminus, the 579-residue chain is Zinc metalloproteinase nas-11 (579 aa).

A signal peptide spans 1–17; that stretch reads MTPSLVFLIVVIVVVEG. The propeptide occupies 18–328; the sequence is QGWRPWDRFN…AAPGSSRLKK (311 aa). Positions 35 to 58 are disordered; the sequence is WGGNNWGTRQRNQEPHDIPPPVPP. N-linked (GlcNAc...) asparagine glycosylation is present at N256. The span at 293–312 shows a compositional bias: acidic residues; the sequence is GDDEIPLPDADTDDEDDDDS. Positions 293 to 323 are disordered; that stretch reads GDDEIPLPDADTDDEDDDDSTNSASGAAPGS. The Peptidase M12A domain occupies 329 to 536; sequence SALYFEGNLI…IELLKKMYCQ (208 aa). 5 disulfide bridges follow: C375/C535, C401/C421, C539/C575, C546/C568, and C555/C572. H430 is a Zn(2+) binding site. The active site involves E431. Residues H434 and H440 each contribute to the Zn(2+) site. An N-linked (GlcNAc...) asparagine glycan is attached at N454. Residues 539–575 enclose the ShKT domain; it reads CDDKNVYCGAWALKDLCKNPGHDQYMAANCKKSCGLC.

It depends on Zn(2+) as a cofactor. In terms of tissue distribution, expressed in the anterior part of the intestine, CEP neurons and to a lesser extent in hypodermis.

The protein localises to the secreted. Functionally, metalloprotease. The chain is Zinc metalloproteinase nas-11 (nas-11) from Caenorhabditis elegans.